Reading from the N-terminus, the 143-residue chain is Large ribosomal subunit protein uL11 (143 aa).

This sequence belongs to the universal ribosomal protein uL11 family. In terms of assembly, part of the ribosomal stalk of the 50S ribosomal subunit. Interacts with L10 and the large rRNA to form the base of the stalk. L10 forms an elongated spine to which L12 dimers bind in a sequential fashion forming a multimeric L10(L12)X complex. In terms of processing, one or more lysine residues are methylated.

Functionally, forms part of the ribosomal stalk which helps the ribosome interact with GTP-bound translation factors. The sequence is that of Large ribosomal subunit protein uL11 from Bifidobacterium adolescentis (strain ATCC 15703 / DSM 20083 / NCTC 11814 / E194a).